A 107-amino-acid polypeptide reads, in one-letter code: Metallothionein-1 (107 aa).

It belongs to the metallothionein superfamily. Type 7 family.

Its function is as follows. The metallothioneins are involved in the cellular sequestration of toxic metal ions. Binds 12 cadmium ions per molecule. The protein is Metallothionein-1 of Tetrahymena thermophila.